The sequence spans 272 residues: Eukaryotic translation initiation factor 3 subunit G (272 aa).

2 disordered regions span residues 1-28 and 143-187; these read MPAL…PTEI and AGKA…RGRD. In terms of domain architecture, RRM spans 190 to 268; sequence TAIRISNLSE…LILNVEWSKP (79 aa).

The protein belongs to the eIF-3 subunit G family. In terms of assembly, component of the eukaryotic translation initiation factor 3 (eIF-3) complex.

The protein localises to the cytoplasm. RNA-binding component of the eukaryotic translation initiation factor 3 (eIF-3) complex, which is involved in protein synthesis of a specialized repertoire of mRNAs and, together with other initiation factors, stimulates binding of mRNA and methionyl-tRNAi to the 40S ribosome. The eIF-3 complex specifically targets and initiates translation of a subset of mRNAs involved in cell proliferation. This subunit can bind 18S rRNA. This chain is Eukaryotic translation initiation factor 3 subunit G, found in Culex quinquefasciatus (Southern house mosquito).